The primary structure comprises 560 residues: Dihydroxy-acid dehydratase (560 aa).

Residues 1–20 (MGDNLKKRSSMTTDGDNRAP) form a disordered region. Residue Cys-52 coordinates [2Fe-2S] cluster. Mg(2+) is bound at residue Asp-84. Cys-125 provides a ligand contact to [2Fe-2S] cluster. Mg(2+) is bound by residues Asp-126 and Lys-127. Residue Lys-127 is modified to N6-carboxylysine. Cys-197 contacts [2Fe-2S] cluster. A Mg(2+)-binding site is contributed by Glu-448. The active-site Proton acceptor is the Ser-474.

Belongs to the IlvD/Edd family. As to quaternary structure, homodimer. It depends on [2Fe-2S] cluster as a cofactor. Mg(2+) is required as a cofactor.

It catalyses the reaction (2R)-2,3-dihydroxy-3-methylbutanoate = 3-methyl-2-oxobutanoate + H2O. The enzyme catalyses (2R,3R)-2,3-dihydroxy-3-methylpentanoate = (S)-3-methyl-2-oxopentanoate + H2O. The protein operates within amino-acid biosynthesis; L-isoleucine biosynthesis; L-isoleucine from 2-oxobutanoate: step 3/4. Its pathway is amino-acid biosynthesis; L-valine biosynthesis; L-valine from pyruvate: step 3/4. Functions in the biosynthesis of branched-chain amino acids. Catalyzes the dehydration of (2R,3R)-2,3-dihydroxy-3-methylpentanoate (2,3-dihydroxy-3-methylvalerate) into 2-oxo-3-methylpentanoate (2-oxo-3-methylvalerate) and of (2R)-2,3-dihydroxy-3-methylbutanoate (2,3-dihydroxyisovalerate) into 2-oxo-3-methylbutanoate (2-oxoisovalerate), the penultimate precursor to L-isoleucine and L-valine, respectively. The sequence is that of Dihydroxy-acid dehydratase from Leptospira interrogans serogroup Icterohaemorrhagiae serovar copenhageni (strain Fiocruz L1-130).